We begin with the raw amino-acid sequence, 54 residues long: Large ribosomal subunit protein bL33 (54 aa).

This sequence belongs to the bacterial ribosomal protein bL33 family.

The sequence is that of Large ribosomal subunit protein bL33 from Thermobifida fusca (strain YX).